We begin with the raw amino-acid sequence, 545 residues long: uncharacterized protein (545 aa).

Disordered stretches follow at residues 1-162 and 200-250; these read MSSG…DPQE and YPPV…EPPP. The segment covering 86–100 has biased composition (polar residues); the sequence is NYRSHSSADYLTPNS. Low complexity-rich tracts occupy residues 109–128 and 141–152; these read TTPRRLPLQPQQQAPATATK and SGASTSSGTSST. Composition is skewed to polar residues over residues 212–221 and 228–244; these read SSRTGTLQRT and ISSTPQPQPTYADQMQS. Positions 458–540 constitute a PDZ domain; that stretch reads RVLVEKMMPG…VTITLLPAVG (83 aa).

This is an uncharacterized protein from Caenorhabditis elegans.